The sequence spans 235 residues: Elongation factor Tu (235 aa).

Positions K1 to E125 constitute a tr-type G domain. N47 to D50 is a binding site for GTP.

Belongs to the TRAFAC class translation factor GTPase superfamily. Classic translation factor GTPase family. EF-Tu/EF-1A subfamily. Monomer.

It localises to the cytoplasm. The catalysed reaction is GTP + H2O = GDP + phosphate + H(+). GTP hydrolase that promotes the GTP-dependent binding of aminoacyl-tRNA to the A-site of ribosomes during protein biosynthesis. The polypeptide is Elongation factor Tu (tufA) (Leptolyngbya ectocarpi (Phormidium ectocarpi)).